Consider the following 77-residue polypeptide: Probable small nuclear ribonucleoprotein G (77 aa).

Positions 4-76 constitute a Sm domain; that stretch reads THPPELKKYM…VVIMEPKERI (73 aa).

Belongs to the snRNP Sm proteins family. Core component of the spliceosomal U1, U2, U4 and U5 small nuclear ribonucleoproteins (snRNPs), the building blocks of the spliceosome.

The protein resides in the cytoplasm. Its subcellular location is the cytosol. It is found in the nucleus. Plays a role in pre-mRNA splicing as a core component of the spliceosomal U1, U2, U4 and U5 small nuclear ribonucleoproteins (snRNPs), the building blocks of the spliceosome. The protein is Probable small nuclear ribonucleoprotein G (snr-7) of Caenorhabditis elegans.